The sequence spans 220 residues: Probable cytidylate kinase (220 aa).

10–18 (GPAASGKSS) is an ATP binding site.

This sequence belongs to the cytidylate kinase family. Type 1 subfamily.

The enzyme catalyses CMP + ATP = CDP + ADP. It catalyses the reaction dCMP + ATP = dCDP + ADP. The sequence is that of Probable cytidylate kinase from Encephalitozoon cuniculi (strain GB-M1) (Microsporidian parasite).